The primary structure comprises 422 residues: E3 ubiquitin-protein ligase IE2 (422 aa).

Residues 1–10 show a composition bias toward polar residues; sequence MSRQINAVTP. 2 disordered regions span residues 1 to 86 and 165 to 215; these read MSRQ…VQII and SPRS…EGEE. The segment covering 14–26 has biased composition (basic residues); that stretch reads SRRHRLSLSRRRI. Positions 36-63 are enriched in low complexity; it reads PSSSSRSQPSSSSRSQPYSSSRSQPYSS. Residues 71–80 show a composition bias toward basic and acidic residues; the sequence is ERSQEQRVSE. The segment covering 179-196 has biased composition (polar residues); sequence DVLSQSPDLFDSPQSPQQ. The span at 200–215 shows a compositional bias: acidic residues; sequence ELEDEDEEEEEEEGEE. Residues 220–268 form an RING-type; degenerate zinc finger; the sequence is CNICFTTLKDTKNVDSSFVTSIDCNHAVCFKCYVRIIMDNSTYKCFCSA. A coiled-coil region spans residues 314–414; that stretch reads IDLNDVERLE…RRNSELVAEL (101 aa).

This sequence belongs to the alphabaculovirus IE2 protein family. In terms of assembly, homooligomer. Auto-ubiquitinated.

Its subcellular location is the host nucleus. The catalysed reaction is S-ubiquitinyl-[E2 ubiquitin-conjugating enzyme]-L-cysteine + [acceptor protein]-L-lysine = [E2 ubiquitin-conjugating enzyme]-L-cysteine + N(6)-ubiquitinyl-[acceptor protein]-L-lysine.. RING-finger E3 ubiquitin ligase that plays an important regulatory role during the initial stages of infection. Migrates to specific nuclear foci early in infection supposely to prepare the sites for viral replication by targeting and ubiquitinating host proteins. In Bombyx mori nuclear polyhedrosis virus (BmNPV), this protein is E3 ubiquitin-protein ligase IE2 (IE2).